The sequence spans 401 residues: MTRISVPAGQERNDGGISVPAGQERSDRGISVVLAGGGTAGHIEPAMAVADALTALDPDVRITALGTERGLETRLVPQRGYHLELITLVPLPRKLSADLFRLPMRVLRAVRQTRRILDEVSADVVVGFGGYVAVPAYLAARSLRTHRRVPVVVHEANASAGWANKVGARSAQRVLSAVPDPGLPHVEVVGVPVREAITSLDRMALRAEARAHFGFADDARVLLVFGGSQGAQSLNRAVAGAAEKLAEQGISVLHAHGPKNTLDLPAPRPGDPPYVAVPYLERMDLAYAAADLAVCRSGAMTVAEVSAVGLPAVYVPLPIGNGEQRLNALPVVEAGGGILVEDRSLTPEFVAETVPGLLNNADTLAAMTAAAALAGHPDAARRVAEVALEVARRARDLRTRR.

The disordered stretch occupies residues 1–24 (MTRISVPAGQERNDGGISVPAGQE). UDP-N-acetyl-alpha-D-glucosamine contacts are provided by residues 39 to 41 (TAG), Asn-157, Arg-194, Ser-228, and Gln-324.

The protein belongs to the glycosyltransferase 28 family. MurG subfamily.

The protein localises to the cell membrane. It catalyses the reaction di-trans,octa-cis-undecaprenyl diphospho-N-acetyl-alpha-D-muramoyl-L-alanyl-D-glutamyl-meso-2,6-diaminopimeloyl-D-alanyl-D-alanine + UDP-N-acetyl-alpha-D-glucosamine = di-trans,octa-cis-undecaprenyl diphospho-[N-acetyl-alpha-D-glucosaminyl-(1-&gt;4)]-N-acetyl-alpha-D-muramoyl-L-alanyl-D-glutamyl-meso-2,6-diaminopimeloyl-D-alanyl-D-alanine + UDP + H(+). The protein operates within cell wall biogenesis; peptidoglycan biosynthesis. Cell wall formation. Catalyzes the transfer of a GlcNAc subunit on undecaprenyl-pyrophosphoryl-MurNAc-pentapeptide (lipid intermediate I) to form undecaprenyl-pyrophosphoryl-MurNAc-(pentapeptide)GlcNAc (lipid intermediate II). The protein is UDP-N-acetylglucosamine--N-acetylmuramyl-(pentapeptide) pyrophosphoryl-undecaprenol N-acetylglucosamine transferase of Mycolicibacterium vanbaalenii (strain DSM 7251 / JCM 13017 / BCRC 16820 / KCTC 9966 / NRRL B-24157 / PYR-1) (Mycobacterium vanbaalenii).